Here is a 172-residue protein sequence, read N- to C-terminus: DNA-directed RNA polymerase II subunit RPB7 (172 aa).

Belongs to the eukaryotic RPB7/RPC8 RNA polymerase subunit family. As to quaternary structure, component of the RNA polymerase II (Pol II) complex consisting of 12 subunits. RPB4 and RPB7 form a subcomplex that protrudes from the 10-subunit Pol II core complex.

The protein localises to the nucleus. DNA-dependent RNA polymerase catalyzes the transcription of DNA into RNA using the four ribonucleoside triphosphates as substrates. Component of RNA polymerase II which synthesizes mRNA precursors and many functional non-coding RNAs. Pol II is the central component of the basal RNA polymerase II transcription machinery. It is composed of mobile elements that move relative to each other. RPB7 is part of a subcomplex with RPB4 that binds to a pocket formed by RPB1, RPB2 and RPB6 at the base of the clamp element. The RPB4-RPB7 subcomplex seems to lock the clamp via RPB7 in the closed conformation thus preventing double-stranded DNA to enter the active site cleft. The RPB4-RPB7 subcomplex binds single-stranded DNA and RNA. The chain is DNA-directed RNA polymerase II subunit RPB7 (polr2g) from Danio rerio (Zebrafish).